The following is a 317-amino-acid chain: Putative pyridoxal kinase BUD17 (317 aa).

Substrate-binding residues include Ser-16 and Tyr-128. ATP is bound by residues 190–191 (TS) and 220–232 (EIPK…SGSG). Asp-233 lines the substrate pocket.

It belongs to the pyridoxine kinase family. The cofactor is a divalent metal cation.

The protein localises to the cytoplasm. It localises to the nucleus. It catalyses the reaction pyridoxal + ATP = pyridoxal 5'-phosphate + ADP + H(+). In terms of biological role, required for synthesis of pyridoxal-5-phosphate from vitamin B6. Important for bud site selection. The sequence is that of Putative pyridoxal kinase BUD17 (BUD17) from Saccharomyces cerevisiae (strain ATCC 204508 / S288c) (Baker's yeast).